The chain runs to 301 residues: MKIRSKDLLTGAELDRKEILGIIESAIRLKKGGRSKAHPLDGRTLAMVFQKPSTRTRVSFAAGMFQLGGEAIYLPPGDMQLSRGETIPDTARALSGYVDVIVARVFGHETIEEIAASASVPVINGLSDTFHPCQILADLMTIKERKGRLKGLRAAWIGDGNNVCNSLLYGCAAVGIDISVATPAVFRPIPGVVDKCRESIDVKLTTDPAEAAAGADIVFTDTFASIHNMDKERERKFLPKYRVNAPLMKKAADDAIFMHCLPAKRGQEVDGEVIDGPQSAVWDEAENRLHSQKALLLALGI.

Carbamoyl phosphate-binding positions include 53-56, Gln80, Arg104, and 131-134; these read STRT and HPCQ. L-ornithine-binding positions include Asn162, Asp221, and 225 to 226; that span reads SI. Residues 260-261 and Arg288 contribute to the carbamoyl phosphate site; that span reads CL.

It belongs to the aspartate/ornithine carbamoyltransferase superfamily. OTCase family.

Its subcellular location is the cytoplasm. It carries out the reaction carbamoyl phosphate + L-ornithine = L-citrulline + phosphate + H(+). Its pathway is amino-acid biosynthesis; L-arginine biosynthesis; L-arginine from L-ornithine and carbamoyl phosphate: step 1/3. Functionally, reversibly catalyzes the transfer of the carbamoyl group from carbamoyl phosphate (CP) to the N(epsilon) atom of ornithine (ORN) to produce L-citrulline. The chain is Ornithine carbamoyltransferase from Cenarchaeum symbiosum (strain A).